We begin with the raw amino-acid sequence, 1052 residues long: Protein HelA (1052 aa).

Helical transmembrane passes span 14–34 (WFVL…FQRL), 121–141 (LPPG…EIFM), 348–368 (GALL…AALI), 369–389 (TAMV…ENQI), 393–413 (LMSL…IIVE), 450–470 (SIFG…LTGV), 483–503 (IIAL…AVAI), 537–557 (VVIS…FHLG), 878–898 (LQIV…ISFG), 903–923 (ALLV…ALWL), 934–954 (VGFI…ITFI), 979–999 (PVLM…LATG), and 1011–1031 (VVIG…PGLY).

This sequence belongs to the resistance-nodulation-cell division (RND) (TC 2.A.6) family.

It localises to the cell inner membrane. In terms of biological role, presumed to function with HelC and HelB in efflux of an unidentified substrate. In Legionella pneumophila, this protein is Protein HelA (helA).